Reading from the N-terminus, the 196-residue chain is Peptidyl-tRNA hydrolase (196 aa).

Residue Tyr-18 participates in tRNA binding. The active-site Proton acceptor is His-23. Phe-69, Asn-71, and Asn-117 together coordinate tRNA.

Belongs to the PTH family. Monomer.

The protein localises to the cytoplasm. It carries out the reaction an N-acyl-L-alpha-aminoacyl-tRNA + H2O = an N-acyl-L-amino acid + a tRNA + H(+). Hydrolyzes ribosome-free peptidyl-tRNAs (with 1 or more amino acids incorporated), which drop off the ribosome during protein synthesis, or as a result of ribosome stalling. Functionally, catalyzes the release of premature peptidyl moieties from peptidyl-tRNA molecules trapped in stalled 50S ribosomal subunits, and thus maintains levels of free tRNAs and 50S ribosomes. The polypeptide is Peptidyl-tRNA hydrolase (Marinobacter nauticus (strain ATCC 700491 / DSM 11845 / VT8) (Marinobacter aquaeolei)).